A 345-amino-acid polypeptide reads, in one-letter code: Homeobox protein DBX1 (345 aa).

Disordered regions lie at residues 55–103 (PRGS…VSPA) and 241–345 (KERE…ITVS). The homeobox DNA-binding region spans 182 to 241 (GMLRRAVFSDVQRKALEKMFQKQKYISKPDRKKLAAKLGLKDSQVKIWFQNRRMKWRNSK). Positions 300–309 (DPRHLRDPRL) are enriched in basic and acidic residues. The segment covering 330 to 345 (SDSEDDEEGEEEITVS) has biased composition (acidic residues).

Belongs to the H2.0 homeobox family.

It localises to the nucleus. Could have a role in patterning the central nervous system during embryogenesis. Has a key role in regulating the distinct phenotypic features that distinguish two major classes of ventral interneurons, V0 and V1 neurons. Regulates the transcription factor profile, neurotransmitter phenotype, intraspinal migratory path and axonal trajectory of V0 neurons, features that differentiate them from an adjacent set of V1 neurons. In Bos taurus (Bovine), this protein is Homeobox protein DBX1 (DBX1).